A 107-amino-acid polypeptide reads, in one-letter code: Iron-sulfur cluster assembly protein CyaY (107 aa).

This sequence belongs to the frataxin family.

Functionally, involved in iron-sulfur (Fe-S) cluster assembly. May act as a regulator of Fe-S biogenesis. The polypeptide is Iron-sulfur cluster assembly protein CyaY (Neisseria meningitidis serogroup B (strain ATCC BAA-335 / MC58)).